The primary structure comprises 258 residues: C1q-related factor (258 aa).

The N-terminal stretch at 1–16 (MLLVLVVLIPVLVSSG) is a signal peptide. The interval 39–120 (GPGAGARSDG…PGSGGSGAIS (82 aa)) is disordered. The span at 67–77 (GPQGKPGRTGK) shows a compositional bias: low complexity. Residues 67–115 (GPQGKPGRTGKPGPPGPPGDRGPPGPVGPPGEKGEPGKPGPPGLPGSGG) enclose the Collagen-like domain. The span at 78 to 95 (PGPPGPPGDRGPPGPVGP) shows a compositional bias: pro residues. One can recognise a C1q domain in the interval 125–258 (TTVPRVAFYA…TFSGFIIYSD (134 aa)).

Interacts with ADGRB3. Forms heterooligomers with C1QL4, when proteins are coexpressed; this interaction does not occur after secretion. As to expression, expressed in brainstem. More abundant in areas of the nervous system involved in motor function, such as the Purkinje cells of the cerebellum, the accessory olivary nucleus, the pons and the red nucleus.

Its subcellular location is the secreted. Its function is as follows. May regulate the number of excitatory synapses that are formed on hippocampus neurons. Has no effect on inhibitory synapses. The chain is C1q-related factor (C1ql1) from Mus musculus (Mouse).